Consider the following 706-residue polypeptide: Histone deacetylase HDA1 (706 aa).

Residues 1–24 (MDSVMVKKEVLENPDHDLKRKLEE) show a composition bias toward basic and acidic residues. Positions 1–36 (MDSVMVKKEVLENPDHDLKRKLEENKEEENSLSTTS) are disordered. Residues 67-396 (RYHAKIFTSY…ALSVAKVLIG (330 aa)) are histone deacetylase. Residue histidine 206 is part of the active site.

It belongs to the histone deacetylase family. HD type 2 subfamily.

It localises to the nucleus. It catalyses the reaction N(6)-acetyl-L-lysyl-[histone] + H2O = L-lysyl-[histone] + acetate. Responsible for the deacetylation of lysine residues on the N-terminal part of the core histones (H2A, H2B, H3 and H4). Histone deacetylation gives a tag for epigenetic repression and plays an important role in transcriptional regulation, cell cycle progression and developmental events. Histone deacetylases act via the formation of large multiprotein complexes. The chain is Histone deacetylase HDA1 (HDA1) from Saccharomyces cerevisiae (strain ATCC 204508 / S288c) (Baker's yeast).